Consider the following 389-residue polypeptide: Lipid-A-disaccharide synthase (389 aa).

It belongs to the LpxB family.

It carries out the reaction a lipid X + a UDP-2-N,3-O-bis[(3R)-3-hydroxyacyl]-alpha-D-glucosamine = a lipid A disaccharide + UDP + H(+). It participates in bacterial outer membrane biogenesis; LPS lipid A biosynthesis. Functionally, condensation of UDP-2,3-diacylglucosamine and 2,3-diacylglucosamine-1-phosphate to form lipid A disaccharide, a precursor of lipid A, a phosphorylated glycolipid that anchors the lipopolysaccharide to the outer membrane of the cell. This chain is Lipid-A-disaccharide synthase, found in Burkholderia cenocepacia (strain ATCC BAA-245 / DSM 16553 / LMG 16656 / NCTC 13227 / J2315 / CF5610) (Burkholderia cepacia (strain J2315)).